The chain runs to 608 residues: Threonine--tRNA ligase (608 aa).

The segment at 1 to 144 (MRILLIHSDY…SRTITAEEEE (144 aa)) is editing domain. Residues 195–489 (PHVKLMREKE…ELDEKAPMLP (295 aa)) are catalytic. Residues Cys286, His338, and His459 each contribute to the Zn(2+) site.

The protein belongs to the class-II aminoacyl-tRNA synthetase family. As to quaternary structure, homodimer. It depends on Zn(2+) as a cofactor.

Its subcellular location is the cytoplasm. It carries out the reaction tRNA(Thr) + L-threonine + ATP = L-threonyl-tRNA(Thr) + AMP + diphosphate + H(+). In terms of biological role, catalyzes the attachment of threonine to tRNA(Thr) in a two-step reaction: L-threonine is first activated by ATP to form Thr-AMP and then transferred to the acceptor end of tRNA(Thr). Also edits incorrectly charged L-seryl-tRNA(Thr). This Methanobrevibacter smithii (strain ATCC 35061 / DSM 861 / OCM 144 / PS) protein is Threonine--tRNA ligase.